Consider the following 296-residue polypeptide: Light-independent protochlorophyllide reductase iron-sulfur ATP-binding protein (296 aa).

ATP is bound by residues 10–15 and Lys39; that span reads GIGKST. Ser14 lines the Mg(2+) pocket. [4Fe-4S] cluster-binding residues include Cys95 and Cys129. 180–181 contacts ATP; the sequence is NR.

It belongs to the NifH/BchL/ChlL family. As to quaternary structure, homodimer. Protochlorophyllide reductase is composed of three subunits; ChlL, ChlN and ChlB. It depends on [4Fe-4S] cluster as a cofactor.

Its subcellular location is the plastid. The protein resides in the chloroplast. It catalyses the reaction chlorophyllide a + oxidized 2[4Fe-4S]-[ferredoxin] + 2 ADP + 2 phosphate = protochlorophyllide a + reduced 2[4Fe-4S]-[ferredoxin] + 2 ATP + 2 H2O. It participates in porphyrin-containing compound metabolism; chlorophyll biosynthesis (light-independent). Component of the dark-operative protochlorophyllide reductase (DPOR) that uses Mg-ATP and reduced ferredoxin to reduce ring D of protochlorophyllide (Pchlide) to form chlorophyllide a (Chlide). This reaction is light-independent. The L component serves as a unique electron donor to the NB-component of the complex, and binds Mg-ATP. The polypeptide is Light-independent protochlorophyllide reductase iron-sulfur ATP-binding protein (Mesostigma viride (Green alga)).